Consider the following 561-residue polypeptide: Putative transport protein YbjL (561 aa).

Transmembrane regions (helical) follow at residues 8-28 (LLNG…LCLG), 32-52 (LGSV…LLGQ), 66-86 (FMLF…SIFF), 94-114 (MLAL…GKLF), and 158-178 (NLSL…IVGA). 2 consecutive RCK C-terminal domains span residues 200-288 (RGLD…SFRN) and 292-373 (VFDR…RIGF). Transmembrane regions (helical) follow at residues 383 to 403 (LLAF…TFQF), 406 to 426 (FSFG…LGFL), 447 to 467 (FGLM…ISNG), 475 to 495 (MLIA…LFGA), and 540 to 560 (AIAN…WPGL).

It belongs to the AAE transporter (TC 2.A.81) family. YbjL subfamily.

It is found in the cell membrane. In Salmonella typhi, this protein is Putative transport protein YbjL.